A 105-amino-acid chain; its full sequence is Large ribosomal subunit protein uL24 (105 aa).

It belongs to the universal ribosomal protein uL24 family. As to quaternary structure, part of the 50S ribosomal subunit.

In terms of biological role, one of two assembly initiator proteins, it binds directly to the 5'-end of the 23S rRNA, where it nucleates assembly of the 50S subunit. Functionally, one of the proteins that surrounds the polypeptide exit tunnel on the outside of the subunit. This is Large ribosomal subunit protein uL24 from Vibrio atlanticus (strain LGP32) (Vibrio splendidus (strain Mel32)).